We begin with the raw amino-acid sequence, 371 residues long: Bifunctional enzyme IspD/IspF (371 aa).

The interval 1-210 (MLDISLIMLS…LNLPKPSWDI (210 aa)) is 2-C-methyl-D-erythritol 4-phosphate cytidylyltransferase. A 2-C-methyl-D-erythritol 2,4-cyclodiphosphate synthase region spans residues 211–371 (FNGNGFDVHE…NLKYFDWMKL (161 aa)). A divalent metal cation contacts are provided by aspartate 217 and histidine 219. Residues 217–219 (DVH) and 243–244 (HS) contribute to the 4-CDP-2-C-methyl-D-erythritol 2-phosphate site. Histidine 251 is a binding site for a divalent metal cation. 4-CDP-2-C-methyl-D-erythritol 2-phosphate contacts are provided by residues 265 to 267 (DIG), 270 to 274 (FPDND), 341 to 344 (TTTE), phenylalanine 348, and arginine 351.

The protein in the N-terminal section; belongs to the IspD/TarI cytidylyltransferase family. IspD subfamily. It in the C-terminal section; belongs to the IspF family. It depends on a divalent metal cation as a cofactor.

The enzyme catalyses 2-C-methyl-D-erythritol 4-phosphate + CTP + H(+) = 4-CDP-2-C-methyl-D-erythritol + diphosphate. The catalysed reaction is 4-CDP-2-C-methyl-D-erythritol 2-phosphate = 2-C-methyl-D-erythritol 2,4-cyclic diphosphate + CMP. Its pathway is isoprenoid biosynthesis; isopentenyl diphosphate biosynthesis via DXP pathway; isopentenyl diphosphate from 1-deoxy-D-xylulose 5-phosphate: step 2/6. It functions in the pathway isoprenoid biosynthesis; isopentenyl diphosphate biosynthesis via DXP pathway; isopentenyl diphosphate from 1-deoxy-D-xylulose 5-phosphate: step 4/6. Its function is as follows. Bifunctional enzyme that catalyzes the formation of 4-diphosphocytidyl-2-C-methyl-D-erythritol from CTP and 2-C-methyl-D-erythritol 4-phosphate (MEP) (IspD), and catalyzes the conversion of 4-diphosphocytidyl-2-C-methyl-D-erythritol 2-phosphate (CDP-ME2P) to 2-C-methyl-D-erythritol 2,4-cyclodiphosphate (ME-CPP) with a corresponding release of cytidine 5-monophosphate (CMP) (IspF). This chain is Bifunctional enzyme IspD/IspF, found in Campylobacter lari (strain RM2100 / D67 / ATCC BAA-1060).